Reading from the N-terminus, the 217-residue chain is Large ribosomal subunit protein uL3 (217 aa).

The protein belongs to the universal ribosomal protein uL3 family. As to quaternary structure, part of the 50S ribosomal subunit. Forms a cluster with proteins L14 and L19.

Functionally, one of the primary rRNA binding proteins, it binds directly near the 3'-end of the 23S rRNA, where it nucleates assembly of the 50S subunit. The sequence is that of Large ribosomal subunit protein uL3 from Mycobacterium marinum (strain ATCC BAA-535 / M).